We begin with the raw amino-acid sequence, 150 residues long: Large ribosomal subunit protein bL9 (150 aa).

Belongs to the bacterial ribosomal protein bL9 family.

In terms of biological role, binds to the 23S rRNA. This chain is Large ribosomal subunit protein bL9, found in Alteromonas mediterranea (strain DSM 17117 / CIP 110805 / LMG 28347 / Deep ecotype).